Here is a 65-residue protein sequence, read N- to C-terminus: uncharacterized protein (65 aa).

It to E.coli YjiX.

This is an uncharacterized protein from Escherichia coli O6:H1 (strain CFT073 / ATCC 700928 / UPEC).